Here is a 452-residue protein sequence, read N- to C-terminus: Ribosomal protein uS12 methylthiotransferase RimO (452 aa).

An MTTase N-terminal domain is found at 5–116; that stretch reads PTIAFSHLGC…IVDVLQRTES (112 aa). [4Fe-4S] cluster-binding residues include cysteine 14, cysteine 50, cysteine 79, cysteine 154, cysteine 158, and cysteine 161. The Radical SAM core domain occupies 140–369; the sequence is TTTSAVAYLR…MATQQPIAER (230 aa). Residues 372–438 form the TRAM domain; sequence RAQIGRLVDV…IYDLHGEVAS (67 aa).

The protein belongs to the methylthiotransferase family. RimO subfamily. Requires [4Fe-4S] cluster as cofactor.

It is found in the cytoplasm. It carries out the reaction L-aspartate(89)-[ribosomal protein uS12]-hydrogen + (sulfur carrier)-SH + AH2 + 2 S-adenosyl-L-methionine = 3-methylsulfanyl-L-aspartate(89)-[ribosomal protein uS12]-hydrogen + (sulfur carrier)-H + 5'-deoxyadenosine + L-methionine + A + S-adenosyl-L-homocysteine + 2 H(+). Catalyzes the methylthiolation of an aspartic acid residue of ribosomal protein uS12. The chain is Ribosomal protein uS12 methylthiotransferase RimO from Synechococcus elongatus (strain ATCC 33912 / PCC 7942 / FACHB-805) (Anacystis nidulans R2).